Here is a 203-residue protein sequence, read N- to C-terminus: Glycerol-3-phosphate acyltransferase (203 aa).

Transmembrane regions (helical) follow at residues 6-26 (LTLL…AVLV), 82-102 (AISL…PIFF), 118-138 (APIG…LLLI), and 141-161 (YSSL…WWLD).

It belongs to the PlsY family. In terms of assembly, probably interacts with PlsX.

It is found in the cell inner membrane. It carries out the reaction an acyl phosphate + sn-glycerol 3-phosphate = a 1-acyl-sn-glycero-3-phosphate + phosphate. It participates in lipid metabolism; phospholipid metabolism. Catalyzes the transfer of an acyl group from acyl-phosphate (acyl-PO(4)) to glycerol-3-phosphate (G3P) to form lysophosphatidic acid (LPA). This enzyme utilizes acyl-phosphate as fatty acyl donor, but not acyl-CoA or acyl-ACP. The polypeptide is Glycerol-3-phosphate acyltransferase (Shewanella putrefaciens (strain CN-32 / ATCC BAA-453)).